The chain runs to 248 residues: Deoxyribose-phosphate aldolase (248 aa).

The active-site Proton donor/acceptor is aspartate 117. Lysine 179 acts as the Schiff-base intermediate with acetaldehyde in catalysis. Lysine 208 (proton donor/acceptor) is an active-site residue.

It belongs to the DeoC/FbaB aldolase family. DeoC type 1 subfamily.

Its subcellular location is the cytoplasm. It carries out the reaction 2-deoxy-D-ribose 5-phosphate = D-glyceraldehyde 3-phosphate + acetaldehyde. Its pathway is carbohydrate degradation; 2-deoxy-D-ribose 1-phosphate degradation; D-glyceraldehyde 3-phosphate and acetaldehyde from 2-deoxy-alpha-D-ribose 1-phosphate: step 2/2. Its function is as follows. Catalyzes a reversible aldol reaction between acetaldehyde and D-glyceraldehyde 3-phosphate to generate 2-deoxy-D-ribose 5-phosphate. The polypeptide is Deoxyribose-phosphate aldolase (Thermotoga sp. (strain RQ2)).